The sequence spans 273 residues: Nitrogenase iron protein 4 (273 aa).

ATP is bound at residue 8-15; that stretch reads GKGGIGKS. Cys94 is a [4Fe-4S] cluster binding site. At Arg97 the chain carries ADP-ribosylarginine; by dinitrogenase reductase ADP-ribosyltransferase. Cys129 contributes to the [4Fe-4S] cluster binding site.

The protein belongs to the NifH/BchL/ChlL family. Homodimer. It depends on [4Fe-4S] cluster as a cofactor. In terms of processing, the reversible ADP-ribosylation of Arg-97 inactivates the nitrogenase reductase and regulates nitrogenase activity.

The enzyme catalyses N2 + 8 reduced [2Fe-2S]-[ferredoxin] + 16 ATP + 16 H2O = H2 + 8 oxidized [2Fe-2S]-[ferredoxin] + 2 NH4(+) + 16 ADP + 16 phosphate + 6 H(+). The key enzymatic reactions in nitrogen fixation are catalyzed by the nitrogenase complex, which has 2 components: the iron protein and the molybdenum-iron protein. In Clostridium pasteurianum, this protein is Nitrogenase iron protein 4 (nifH4).